We begin with the raw amino-acid sequence, 208 residues long: Small ribosomal subunit protein uS4 (208 aa).

Positions 95–161 constitute an S4 RNA-binding domain; the sequence is MRLDALVLRA…VPLQVAAAGA (67 aa).

Belongs to the universal ribosomal protein uS4 family. In terms of assembly, part of the 30S ribosomal subunit. Contacts protein S5. The interaction surface between S4 and S5 is involved in control of translational fidelity.

Functionally, one of the primary rRNA binding proteins, it binds directly to 16S rRNA where it nucleates assembly of the body of the 30S subunit. In terms of biological role, with S5 and S12 plays an important role in translational accuracy. The polypeptide is Small ribosomal subunit protein uS4 (Pseudarthrobacter chlorophenolicus (strain ATCC 700700 / DSM 12829 / CIP 107037 / JCM 12360 / KCTC 9906 / NCIMB 13794 / A6) (Arthrobacter chlorophenolicus)).